Reading from the N-terminus, the 63-residue chain is MSRICAICGKGPSFGNNVSHANNKTRTVWYPNLQKIKAVRNGSVKTIKVCTRCIRSGHVTKAL.

This sequence belongs to the bacterial ribosomal protein bL28 family.

This chain is Large ribosomal subunit protein bL28, found in Pelobacter propionicus (strain DSM 2379 / NBRC 103807 / OttBd1).